The primary structure comprises 114 residues: Protein ORF3 (114 aa).

2 hydrophobic regions span residues cysteine 6–cysteine 22 and alanine 33–leucine 53. The tract at residues valine 28–proline 68 is interaction with host HPX. Residues valine 48–proline 72 are interaction with the capsid protein. Serine 71 bears the Phosphoserine; by host mark. The segment at proline 72–arginine 114 is homodimerization, and interaction with host AMBP/bikunin. Residues leucine 91–arginine 114 are disordered. The interaction with host SRC, HCK, FYN, PIK3R3 and GRB2 stretch occupies residues arginine 95–valine 104. The PTAP/PSAP motif motif lies at proline 96–proline 99.

The protein belongs to the hepevirus ORF3 protein family. In terms of assembly, forms homooligomers. Interacts with host SRC, HCK, FYN, PIK3R3 and GRB2 (via SH3 domain); binding does not activate the kinases. Interacts with host AMBP/bikunin and AMBP/alpha-1-microglobulin peptides. Interacts with host HPX/hemopexin. Interacts (when phosphorylated) with capsid protein ORF2. Interacts with host TSG101; this interaction plays a role in viral release from the host cell. Interacts with host SIRPA; this interaction down-regulates the phosphorylation of host IRF3. Post-translationally, palmitoylated in the N-terminus.

The protein resides in the host endoplasmic reticulum membrane. It is found in the host cytoplasm. It localises to the host cytoskeleton. The protein localises to the virion. Its subcellular location is the host cell membrane. Small multifunctional phosphoprotein involved in virion morphogenesis, egress and counteracting host innate immunity. Plays critical roles in the final steps of viral release by interacting with host TSG101, a member of the vacuolar protein-sorting pathway and using other cellular host proteins involved in vesicle formation pathway. Also acts as a viroporin and forms ion conductive pores allowing viral particle release. Impairs the generation of type I interferon by down-regulating host TLR3 and TLR7 as well as their downstream signaling pathways. Down-regulates the phosphorylation of host IRF3 via the interaction with host SIRP-alpha, thereby inhibiting IFN-I expression. Interacts with host microtubules. This Homo sapiens (Human) protein is Protein ORF3.